The sequence spans 100 residues: Probable DNA-binding protein HU (100 aa).

It belongs to the bacterial histone-like protein family.

Its function is as follows. Histone-like DNA-binding protein which is capable of wrapping DNA to stabilize it, and thus to prevent its denaturation under extreme environmental conditions. In Chlamydia muridarum (strain MoPn / Nigg), this protein is Probable DNA-binding protein HU (hup).